Consider the following 266-residue polypeptide: Exosome complex component Rrp42 (266 aa).

The protein belongs to the RNase PH family. Rrp42 subfamily. Component of the archaeal exosome complex. Forms a hexameric ring-like arrangement composed of 3 Rrp41-Rrp42 heterodimers. The hexameric ring associates with a trimer of Rrp4 and/or Csl4 subunits.

Its subcellular location is the cytoplasm. Its function is as follows. Non-catalytic component of the exosome, which is a complex involved in RNA degradation. Contributes to the structuring of the Rrp41 active site. The polypeptide is Exosome complex component Rrp42 (Methanosarcina mazei (strain ATCC BAA-159 / DSM 3647 / Goe1 / Go1 / JCM 11833 / OCM 88) (Methanosarcina frisia)).